Here is a 304-residue protein sequence, read N- to C-terminus: 1D-myo-inositol 2-acetamido-2-deoxy-alpha-D-glucopyranoside deacetylase 2 (304 aa).

Positions 17, 20, and 152 each coordinate Zn(2+).

This sequence belongs to the MshB deacetylase family. Zn(2+) is required as a cofactor.

It carries out the reaction 1D-myo-inositol 2-acetamido-2-deoxy-alpha-D-glucopyranoside + H2O = 1D-myo-inositol 2-amino-2-deoxy-alpha-D-glucopyranoside + acetate. In terms of biological role, catalyzes the deacetylation of 1D-myo-inositol 2-acetamido-2-deoxy-alpha-D-glucopyranoside (GlcNAc-Ins) in the mycothiol biosynthesis pathway. The protein is 1D-myo-inositol 2-acetamido-2-deoxy-alpha-D-glucopyranoside deacetylase 2 of Catenulispora acidiphila (strain DSM 44928 / JCM 14897 / NBRC 102108 / NRRL B-24433 / ID139908).